The primary structure comprises 574 residues: Interleukin-22 receptor subunit alpha-1 (574 aa).

The first 15 residues, 1 to 15 (MRTLLTILTVGSLAA), serve as a signal peptide directing secretion. Over 16-228 (HAPEDPSDLL…VKTLPDRTWT (213 aa)) the chain is Extracellular. 2 consecutive Fibronectin type-III domains span residues 17 to 124 (APED…LKPP) and 141 to 221 (PTPT…RVKT). Cysteines 71 and 79 form a disulfide. 2 N-linked (GlcNAc...) asparagine glycosylation sites follow: Asn-80 and Asn-172. Cys-128 and Cys-217 are joined by a disulfide. A helical membrane pass occupies residues 229–249 (YSFSGAFLFSMGFLVAVLCYL). The Cytoplasmic segment spans residues 250-574 (SYRYVTKPPA…GLALTVQWES (325 aa)). Disordered regions lie at residues 388 to 440 (SSYA…AGSC), 454 to 489 (AMEESQEAKSLHQPLGICTDRTSDPNVLHSGEEGTP), and 507 to 560 (HPMS…TELD). Phosphoserine is present on residues Ser-410 and Ser-414.

The protein belongs to the type II cytokine receptor family. In terms of assembly, heterodimer with IL10RB and with IL20RB. IL22 binding to heterodimer is greater than binding to IL22RA1 alone. Interacts with FBXW12; the interaction promotes ubiquitination of IL22RA1. Ubiquitinated. In terms of tissue distribution, expressed in colon, liver, lung, pancreas and kidney. No expression in immune cells such as monocytes, T-cells, and NK-cells. Expressed in keratinocytes of normal skin as well as in psoriatic skin lesion. Detected in normal blood brain barrier endothelial cells as well as in multiple sclerosis lesions; Strongly expressed on central nervous system vessels within infiltrated multiple sclerosis lesions. Overexpressed in synovial fluid cells from rheumatoid arthritis and spondyloarthropathy patients.

The protein localises to the cell membrane. In terms of biological role, component of the receptor for IL20, IL22 and IL24. Component of IL22 receptor formed by IL22RA1 and IL10RB enabling IL22 signaling via JAK/STAT pathways. IL22 also induces activation of MAPK1/MAPK3 and Akt kinases pathways. Component of one of the receptor for IL20 and IL24 formed by IL22RA1 and IL20RB also signaling through STATs activation. Mediates IL24 antiangiogenic activity as well as IL24 inhibitory effect on endothelial cell tube formation and differentiation. The sequence is that of Interleukin-22 receptor subunit alpha-1 (IL22RA1) from Homo sapiens (Human).